Here is a 319-residue protein sequence, read N- to C-terminus: Solute carrier family 25 member 34 (319 aa).

The interval 1–22 (MNSAFSGPSSPTPGPSPPRPPL) is disordered. Residues 10–22 (SPTPGPSPPRPPL) show a composition bias toward pro residues. Solcar repeat units lie at residues 22-115 (LWPP…MQAA), 119-212 (DGPC…AKDW), and 222-313 (LSSL…LRQR). 6 consecutive transmembrane segments (helical) span residues 25-45 (PLDFGLGALACCGACVFTNPL), 63-83 (SYRRLYRGVLQALWVVGRTDG), 116-138 (GVTDGPCCSLIAGAAAGALGAFI), 188-209 (VNGAVPRVMVGSATQLATFSSA), 224-244 (SLNTLCAAVMSGVAVSIIMTP), and 296-319 (LAPHTTLSMLLWDVLRQRALPYTH).

It belongs to the mitochondrial carrier (TC 2.A.29) family.

The protein resides in the mitochondrion inner membrane. This Danio rerio (Zebrafish) protein is Solute carrier family 25 member 34 (slc25a34).